Reading from the N-terminus, the 279-residue chain is HTH-type transcriptional regulator BhcR (279 aa).

Residues 1–13 (MSVQIRKRGRPRG) show a composition bias toward basic residues. The interval 1–21 (MSVQIRKRGRPRGRAGGLGAE) is disordered. The region spanning 26–87 (IRALDRALDI…SQTQAWHVGP (62 aa)) is the HTH iclR-type domain. The H-T-H motif DNA-binding region spans 47 to 66 (LTEIAQRLDMAPSTVHRVLV). The 170-residue stretch at 102–271 (LVERARPLLR…ARELSFGMAP (170 aa)) folds into the IclR-ED domain.

Transcriptional regulator of the bhc gene cluster involved in glycolate and glyoxylate assimilation via the beta-hydroxyaspartate cycle (BHAC). Glyoxylate negatively affects the interaction of BhcR with the promoter region of the bhc gene cluster. This chain is HTH-type transcriptional regulator BhcR, found in Paracoccus denitrificans (strain Pd 1222).